The sequence spans 189 residues: Ornithine decarboxylase antizyme 2 (189 aa).

Position 186 is a phosphoserine (Ser186).

Belongs to the ODC antizyme family. Interacts with ODC1 and thereby sterically blocks ODC homodimerization. Interacts with AZIN2; this interaction disrupts the interaction between the antizyme and ODC1.

The protein resides in the nucleus. Ornithine decarboxylase (ODC) antizyme protein that negatively regulates ODC activity and intracellular polyamine biosynthesis and uptake in response to increased intracellular polyamine levels. Binds to ODC monomers, inhibiting the assembly of the functional ODC homodimers. Does not target the ODC monomers for degradation, which allows a protein synthesis-independent restoration of ODC activity. Involved in the translocation of AZIN2 from ER-Golgi intermediate compartment (ERGIC) to the cytosol. The polypeptide is Ornithine decarboxylase antizyme 2 (OAZ2) (Homo sapiens (Human)).